We begin with the raw amino-acid sequence, 647 residues long: Beta-galactosidase (647 aa).

Residues Met-1–Gly-24 form the signal peptide. Residues Ile-25 to Thr-29 constitute a propeptide that is removed on maturation. Asn-27 carries N-linked (GlcNAc...) asparagine glycosylation. The substrate site is built by Tyr-84, Glu-130, and Asn-188. Glu-189 serves as the catalytic Proton donor. Cys-196 and Cys-231 are oxidised to a cystine. Asn-248 carries an N-linked (GlcNAc...) asparagine glycan. The Nucleophile role is filled by Glu-269. Tyr-334 is a substrate binding site. 6 N-linked (GlcNAc...) asparagine glycosylation sites follow: Asn-500, Asn-504, Asn-510, Asn-544, Asn-557, and Asn-617. A disulfide bridge links Cys-628 with Cys-636.

Belongs to the glycosyl hydrolase 35 family. As to quaternary structure, homodimer. May form higher multimers.

The protein localises to the lysosome. It catalyses the reaction Hydrolysis of terminal non-reducing beta-D-galactose residues in beta-D-galactosides.. Cleaves beta-linked terminal galactosyl residues from gangliosides, glycoproteins, and glycosaminoglycans. This is Beta-galactosidase (Glb1) from Mus musculus (Mouse).